The primary structure comprises 602 residues: Elongation factor 4 (602 aa).

The 183-residue stretch at 7-189 (SRIRNFCIIA…AVVDRVPAPA (183 aa)) folds into the tr-type G domain. GTP is bound by residues 19-24 (DHGKST) and 136-139 (NKID).

This sequence belongs to the TRAFAC class translation factor GTPase superfamily. Classic translation factor GTPase family. LepA subfamily.

The protein resides in the cell inner membrane. The enzyme catalyses GTP + H2O = GDP + phosphate + H(+). Functionally, required for accurate and efficient protein synthesis under certain stress conditions. May act as a fidelity factor of the translation reaction, by catalyzing a one-codon backward translocation of tRNAs on improperly translocated ribosomes. Back-translocation proceeds from a post-translocation (POST) complex to a pre-translocation (PRE) complex, thus giving elongation factor G a second chance to translocate the tRNAs correctly. Binds to ribosomes in a GTP-dependent manner. The sequence is that of Elongation factor 4 from Synechococcus sp. (strain CC9902).